A 351-amino-acid polypeptide reads, in one-letter code: MKKILFLFTASLLLHVTLQAAKISDVASIVGVRDNHLIGYSLVVGLQKTGDGTTSKFTLQSIANMLKAMNIDMKPIDIKSKNVAAVVVTAELAPFARQGDKINITVSSIGDAKSLEGGTLLMTPLKGVDGKIYALAQGAVSIGGRNGKGAGDSHPTAGLIYDGGLVEREIAIDLYNQDYVTLSLKDANFQNSVSIQKTLNGYYSTEVAVAMDSRTVKLKKPSNKTMIEFLAEVQEINMDYNVQDRIVINERTGTIISGVGIHIKPIIMTHGDITIKITEQENPDKPAGSMVVDENMVIGLNENELYTKEGTTTVANLVRSLQKLGATPKDIISILEAMKSAGSISAELKLI.

Positions 1–20 (MKKILFLFTASLLLHVTLQA) are cleaved as a signal peptide.

This sequence belongs to the FlgI family. As to quaternary structure, the basal body constitutes a major portion of the flagellar organelle and consists of four rings (L,P,S, and M) mounted on a central rod.

Its subcellular location is the periplasm. It localises to the bacterial flagellum basal body. Its function is as follows. Assembles around the rod to form the L-ring and probably protects the motor/basal body from shearing forces during rotation. The polypeptide is Flagellar P-ring protein (Sulfurimonas denitrificans (strain ATCC 33889 / DSM 1251) (Thiomicrospira denitrificans (strain ATCC 33889 / DSM 1251))).